Reading from the N-terminus, the 342-residue chain is Protein RecA 1 (342 aa).

68 to 75 (GNESSGKT) serves as a coordination point for ATP.

It belongs to the RecA family.

The protein resides in the cytoplasm. Can catalyze the hydrolysis of ATP in the presence of single-stranded DNA, the ATP-dependent uptake of single-stranded DNA by duplex DNA, and the ATP-dependent hybridization of homologous single-stranded DNAs. It interacts with LexA causing its activation and leading to its autocatalytic cleavage. This chain is Protein RecA 1, found in Myxococcus xanthus.